The primary structure comprises 520 residues: MATILIVVLLLASIGVGYGLRAKKHSETLAQARKAAEKIIEHERQKTKAEVAEYEKNSVQETQQYQETIDQELADDLHDNQRKEAWIEQRMNLLNQKKIVLTNRADALAKKRQSLLQERDNVRTTLGEAKQLITDRWNKLQEVADLEEQAASKLVLKETKQDAIRSKDEFVNNAQTELESSCEREAEDLIALAMEHSDVPRGQAENHRSFIAENAEYLGKLIGNSGQNVRAIEALTGVDIVIDDQEKEVILNGYDPVRRAVAMETMEMIKTEKRVVPDTIERLVNKANKVIDQRIRQYGEDAVRELKLKYVAPDLIKFIGRMHYRTSYGQNILEHSIETAKLAGIFAVELGEDATLARRAGLLHDIGKSIDRDIEATHVELGVELTTKYRESPVIVNTIASHHGDVEARYVIANLVEAADAISGARQGARSESVADYIQRIKSLEEIANKHPEVKESYAIQAGRELRVIVQPKETDDKTIHSLATNVKNQIEEDVTYPGQVKVTVVRKLEIVEYVEKKQA.

A helical transmembrane segment spans residues 7-23 (VVLLLASIGVGYGLRAK). In terms of domain architecture, KH spans 206–269 (NHRSFIAENA…AVAMETMEMI (64 aa)). The HD domain occupies 332-425 (ILEHSIETAK…VEAADAISGA (94 aa)).

It belongs to the RNase Y family.

The protein localises to the cell membrane. In terms of biological role, endoribonuclease that initiates mRNA decay. This chain is Ribonuclease Y 2, found in Pediococcus pentosaceus (strain ATCC 25745 / CCUG 21536 / LMG 10740 / 183-1w).